A 468-amino-acid chain; its full sequence is Uronate isomerase (468 aa).

The protein belongs to the metallo-dependent hydrolases superfamily. Uronate isomerase family.

It catalyses the reaction D-glucuronate = D-fructuronate. The catalysed reaction is aldehydo-D-galacturonate = keto-D-tagaturonate. It participates in carbohydrate metabolism; pentose and glucuronate interconversion. The polypeptide is Uronate isomerase (Endomicrobium trichonymphae).